The following is a 316-amino-acid chain: 4-diphosphocytidyl-2-C-methyl-D-erythritol kinase (316 aa).

Residue lysine 23 is part of the active site. 108-118 (PVAGGMAGGSA) serves as a coordination point for ATP. Aspartate 150 is a catalytic residue.

It belongs to the GHMP kinase family. IspE subfamily.

The catalysed reaction is 4-CDP-2-C-methyl-D-erythritol + ATP = 4-CDP-2-C-methyl-D-erythritol 2-phosphate + ADP + H(+). Its pathway is isoprenoid biosynthesis; isopentenyl diphosphate biosynthesis via DXP pathway; isopentenyl diphosphate from 1-deoxy-D-xylulose 5-phosphate: step 3/6. Functionally, catalyzes the phosphorylation of the position 2 hydroxy group of 4-diphosphocytidyl-2C-methyl-D-erythritol. This Mycobacterium avium (strain 104) protein is 4-diphosphocytidyl-2-C-methyl-D-erythritol kinase.